Consider the following 293-residue polypeptide: 4-hydroxy-tetrahydrodipicolinate synthase (293 aa).

T45 serves as a coordination point for pyruvate. Y133 acts as the Proton donor/acceptor in catalysis. K161 functions as the Schiff-base intermediate with substrate in the catalytic mechanism. Residue I203 participates in pyruvate binding.

The protein belongs to the DapA family. In terms of assembly, homotetramer; dimer of dimers.

The protein localises to the cytoplasm. It carries out the reaction L-aspartate 4-semialdehyde + pyruvate = (2S,4S)-4-hydroxy-2,3,4,5-tetrahydrodipicolinate + H2O + H(+). Its pathway is amino-acid biosynthesis; L-lysine biosynthesis via DAP pathway; (S)-tetrahydrodipicolinate from L-aspartate: step 3/4. Functionally, catalyzes the condensation of (S)-aspartate-beta-semialdehyde [(S)-ASA] and pyruvate to 4-hydroxy-tetrahydrodipicolinate (HTPA). The polypeptide is 4-hydroxy-tetrahydrodipicolinate synthase (Aliivibrio fischeri (strain MJ11) (Vibrio fischeri)).